The following is a 460-amino-acid chain: MPKLTYKSVSEISGPLLFVENVPNAAYNEMVDIELDNGETRQGQVLDTRKGLAIVQIFGATTGIGTEGTRVKFRGETARLPISEDMLGRVFNGIGEPIDGGPEILAKERMEITSNAINPYSREEPSEFIETGISAIDGMNTLVRGQKLPIFSGSGLPHNQLAAQIARQAKVLDSSENFAVVFGAMGITSEEANYFTNQFRETGALSRSVMFLNLSSDPSMERIILPRIALTTAEYLAFQKEMHILVILTDMTNYCEALREISSAREEVPGRRGYPGYMYTDLSTIYERAGKLKGNNGSITQIPILTMPGDDITHPVPDLTGYITEGQVVVSRDLNRKGIYPGIDVLLSLSRLMNQGIGKGHTREDHRGLADQLYSAYASGKDLRSLTAIVGEEALSQNDRKYLRFADTFEERYLKQDFFEDRSIEDTLNLGWELLADLPESDMKRVKPDHIKKYGKWKKE.

It belongs to the ATPase alpha/beta chains family. Has multiple subunits with at least A(3), B(3), C, D, E, F, H, I and proteolipid K(x).

Its subcellular location is the cell membrane. Component of the A-type ATP synthase that produces ATP from ADP in the presence of a proton gradient across the membrane. The B chain is a regulatory subunit. The sequence is that of A-type ATP synthase subunit B from Thermoplasma volcanium (strain ATCC 51530 / DSM 4299 / JCM 9571 / NBRC 15438 / GSS1).